A 672-amino-acid polypeptide reads, in one-letter code: Threonine--tRNA ligase (672 aa).

Residues 2–60 form the TGS domain; the sequence is SEPKNILLTVDGELREVTHGTTGLDLFREKPTTAVMRVDGLLWDLAREIPAGASVESVD. The catalytic stretch occupies residues 260–567; that stretch reads DHRKLGAELD…LTEHYAGAFP (308 aa). Zn(2+) is bound by residues C366, H417, and H544.

Belongs to the class-II aminoacyl-tRNA synthetase family. In terms of assembly, homodimer. The cofactor is Zn(2+).

It is found in the cytoplasm. The enzyme catalyses tRNA(Thr) + L-threonine + ATP = L-threonyl-tRNA(Thr) + AMP + diphosphate + H(+). Functionally, catalyzes the attachment of threonine to tRNA(Thr) in a two-step reaction: L-threonine is first activated by ATP to form Thr-AMP and then transferred to the acceptor end of tRNA(Thr). Also edits incorrectly charged L-seryl-tRNA(Thr). The chain is Threonine--tRNA ligase from Micrococcus luteus (strain ATCC 4698 / DSM 20030 / JCM 1464 / CCM 169 / CCUG 5858 / IAM 1056 / NBRC 3333 / NCIMB 9278 / NCTC 2665 / VKM Ac-2230) (Micrococcus lysodeikticus).